A 412-amino-acid chain; its full sequence is Tyrosine--tRNA ligase (412 aa).

Tyr-31 contributes to the L-tyrosine binding site. The short motif at Pro-36–His-45 is the 'HIGH' region element. L-tyrosine is bound by residues Tyr-162 and Gln-166. A 'KMSKS' region motif is present at residues Lys-222–Thr-226. Lys-225 contributes to the ATP binding site. The region spanning Lys-345–Leu-411 is the S4 RNA-binding domain.

The protein belongs to the class-I aminoacyl-tRNA synthetase family. TyrS type 1 subfamily. As to quaternary structure, homodimer.

The protein resides in the cytoplasm. It catalyses the reaction tRNA(Tyr) + L-tyrosine + ATP = L-tyrosyl-tRNA(Tyr) + AMP + diphosphate + H(+). In terms of biological role, catalyzes the attachment of tyrosine to tRNA(Tyr) in a two-step reaction: tyrosine is first activated by ATP to form Tyr-AMP and then transferred to the acceptor end of tRNA(Tyr). The protein is Tyrosine--tRNA ligase of Chlamydia trachomatis serovar A (strain ATCC VR-571B / DSM 19440 / HAR-13).